A 116-amino-acid chain; its full sequence is Somatostatin (116 aa).

The N-terminal stretch at 1 to 24 (MLSCRLQCALALLSIALAVGTVSA) is a signal peptide. A propeptide spanning residues 25 to 88 (APSDPRLRQF…QDEVRLELER (64 aa)) is cleaved from the precursor. The tract at residues 60–82 (PSQTENEALESEDLSRGAEQDEV) is disordered. Over residues 72-82 (DLSRGAEQDEV) the composition is skewed to basic and acidic residues. An intrachain disulfide couples Cys-105 to Cys-116.

Belongs to the somatostatin family.

The protein localises to the secreted. Its function is as follows. Somatostatin inhibits the release of somatotropin. The protein is Somatostatin (SST) of Gallus gallus (Chicken).